The chain runs to 633 residues: Polypeptide N-acetylgalactosaminyltransferase 3 (633 aa).

At 1-19 the chain is on the cytoplasmic side; it reads MAHLKRLVKLHIKRHYHKK. A helical; Signal-anchor for type II membrane protein membrane pass occupies residues 20–37; sequence FWKLGAVIFFFIIVLVLM. Topologically, residues 38 to 633 are lumenal; the sequence is QREVSVQYSK…LQKWILSQND (596 aa). N-linked (GlcNAc...) asparagine glycosylation occurs at N132. The interval 184–293 is catalytic subdomain A; sequence LPTTSVIIVF…YGWLEPLLAR (110 aa). D277 and H279 together coordinate Mn(2+). Residue N297 is glycosylated (N-linked (GlcNAc...) asparagine). Positions 356-418 are catalytic subdomain B; that stretch reads PIKTPTFAGG…PCSVVGHVFR (63 aa). H415 contacts Mn(2+). An N-linked (GlcNAc...) asparagine glycan is attached at N484. A Ricin B-type lectin domain is found at 504–630; sequence VISGYIKSVG…SDPLQKWILS (127 aa). C517 and C535 are joined by a disulfide. The UDP-N-acetyl-alpha-D-galactosamine site is built by D519, E522, H536, and N541. Intrachain disulfides connect C561/C574 and C605/C618.

The protein belongs to the glycosyltransferase 2 family. GalNAc-T subfamily. The cofactor is Mn(2+). In terms of tissue distribution, expressed in organs that contain secretory epithelial glands. Highly expressed in pancreas, skin, kidney and testis. Weakly expressed in prostate, ovary, intestine and colon. Also expressed in placenta and lung and fetal lung and fetal kidney.

Its subcellular location is the golgi apparatus. It is found in the golgi stack membrane. The enzyme catalyses L-seryl-[protein] + UDP-N-acetyl-alpha-D-galactosamine = a 3-O-[N-acetyl-alpha-D-galactosaminyl]-L-seryl-[protein] + UDP + H(+). It carries out the reaction L-threonyl-[protein] + UDP-N-acetyl-alpha-D-galactosamine = a 3-O-[N-acetyl-alpha-D-galactosaminyl]-L-threonyl-[protein] + UDP + H(+). Its pathway is protein modification; protein glycosylation. Functionally, catalyzes the initial reaction in O-linked oligosaccharide biosynthesis, the transfer of an N-acetyl-D-galactosamine residue to a serine or threonine residue on the protein receptor. Has activity toward HIV envelope glycoprotein gp120, EA2, MUC2, MUC1A and MUC5AC. Probably glycosylates fibronectin in vivo. Glycosylates FGF23. This is Polypeptide N-acetylgalactosaminyltransferase 3 (GALNT3) from Homo sapiens (Human).